Consider the following 562-residue polypeptide: Probable tRNA (uracil-O(2)-)-methyltransferase (562 aa).

Residues 520 to 546 (VSRRQQTNPKKQEATNRPKQPCWMSLN) are disordered. The C3H1-type zinc finger occupies 535–562 (NRPKQPCWMSLNHPDGCPLGPESCRYLH).

It belongs to the TRM44 family.

It localises to the cytoplasm. The enzyme catalyses uridine(44) in tRNA(Ser) + S-adenosyl-L-methionine = 2'-O-methyluridine(44) in tRNA(Ser) + S-adenosyl-L-homocysteine + H(+). Its function is as follows. Probable adenosyl-L-methionine (AdoMet)-dependent tRNA (uracil-O(2)-)-methyltransferase. The protein is Probable tRNA (uracil-O(2)-)-methyltransferase of Caenorhabditis briggsae.